We begin with the raw amino-acid sequence, 554 residues long: 3-(3-hydroxy-phenyl)propionate/3-hydroxycinnamic acid hydroxylase (554 aa).

Residues 17–46 and 285–295 each bind FAD; these read QVAIAGAGPVGLMMANYLGQMGIDVLVVEK and FRIDRVLLAGD.

The protein belongs to the PheA/TfdB FAD monooxygenase family. The cofactor is FAD.

It carries out the reaction 3-(3-hydroxyphenyl)propanoate + NADH + O2 + H(+) = 3-(2,3-dihydroxyphenyl)propanoate + NAD(+) + H2O. It catalyses the reaction (2E)-3-(3-hydroxyphenyl)prop-2-enoate + NADH + O2 + H(+) = (2E)-3-(2,3-dihydroxyphenyl)prop-2-enoate + NAD(+) + H2O. Its pathway is aromatic compound metabolism; 3-phenylpropanoate degradation. Its function is as follows. Catalyzes the insertion of one atom of molecular oxygen into position 2 of the phenyl ring of 3-(3-hydroxyphenyl)propionate (3-HPP) and hydroxycinnamic acid (3HCI). The polypeptide is 3-(3-hydroxy-phenyl)propionate/3-hydroxycinnamic acid hydroxylase (Escherichia coli O139:H28 (strain E24377A / ETEC)).